A 449-amino-acid chain; its full sequence is Tubulin alpha-1C chain (449 aa).

The MREC motif motif lies at 1-4 (MREC). Gln-11 serves as a coordination point for GTP. Lys-40 is subject to N6-acetyllysine. The GTP site is built by Glu-71, Ser-140, Gly-144, Thr-145, Thr-179, Asn-206, and Asn-228. Glu-71 provides a ligand contact to Mg(2+). Glu-254 is a catalytic residue. Position 282 is a 3'-nitrotyrosine (Tyr-282). Position 432 is a phosphotyrosine (Tyr-432). The residue at position 439 (Ser-439) is a Phosphoserine. Position 449 is a 3'-nitrotyrosine (Tyr-449).

This sequence belongs to the tubulin family. Dimer of alpha and beta chains. A typical microtubule is a hollow water-filled tube with an outer diameter of 25 nm and an inner diameter of 15 nM. Alpha-beta heterodimers associate head-to-tail to form protofilaments running lengthwise along the microtubule wall with the beta-tubulin subunit facing the microtubule plus end conferring a structural polarity. Microtubules usually have 13 protofilaments but different protofilament numbers can be found in some organisms and specialized cells. The cofactor is Mg(2+). Some glutamate residues at the C-terminus are polyglycylated, resulting in polyglycine chains on the gamma-carboxyl group. Glycylation is mainly limited to tubulin incorporated into axonemes (cilia and flagella) whereas glutamylation is prevalent in neuronal cells, centrioles, axonemes, and the mitotic spindle. Both modifications can coexist on the same protein on adjacent residues, and lowering polyglycylation levels increases polyglutamylation, and reciprocally. Cilia and flagella glycylation is required for their stability and maintenance. Flagella glycylation controls sperm motility. Post-translationally, some glutamate residues at the C-terminus are polyglutamylated, resulting in polyglutamate chains on the gamma-carboxyl group. Polyglutamylation plays a key role in microtubule severing by spastin (SPAST). SPAST preferentially recognizes and acts on microtubules decorated with short polyglutamate tails: severing activity by SPAST increases as the number of glutamates per tubulin rises from one to eight, but decreases beyond this glutamylation threshold. Glutamylation is also involved in cilia motility. In terms of processing, acetylation of alpha chains at Lys-40 is located inside the microtubule lumen. This modification has been correlated with increased microtubule stability, intracellular transport and ciliary assembly. Methylation of alpha chains at Lys-40 is found in mitotic microtubules and is required for normal mitosis and cytokinesis contributing to genomic stability. Post-translationally, nitration of Tyr-449 is irreversible and interferes with normal dynein intracellular distribution. In terms of processing, undergoes a tyrosination/detyrosination cycle, the cyclic removal and re-addition of a C-terminal tyrosine residue by the enzymes tubulin tyrosine carboxypeptidase (MATCAP1, VASH1 or VASH2) and tubulin tyrosine ligase (TTL), respectively. Tyrosination promotes microtubule interaction with CAP-Gly domain-containing proteins such as CLIP1, CLIP2 and DCTN1. Tyrosination regulates the initiation of dynein-dynactin motility via interaction with DCTN1, which brings the dynein-dynactin complex into contact with microtubules. In neurons, tyrosinated tubulins mediate the initiation of retrograde vesicle transport. Post-translationally, detyrosination is involved in metaphase plate congression by guiding chromosomes during mitosis: detyrosination promotes interaction with CENPE, promoting pole-proximal transport of chromosomes toward the equator. Detyrosination increases microtubules-dependent mechanotransduction in dystrophic cardiac and skeletal muscle. In cardiomyocytes, detyrosinated microtubules are required to resist to contractile compression during contraction: detyrosination promotes association with desmin (DES) at force-generating sarcomeres, leading to buckled microtubules and mechanical resistance to contraction. In terms of tissue distribution, minor alpha-tubulin expressed in all tissues.

The protein localises to the cytoplasm. The protein resides in the cytoskeleton. It catalyses the reaction GTP + H2O = GDP + phosphate + H(+). Its function is as follows. Tubulin is the major constituent of microtubules, a cylinder consisting of laterally associated linear protofilaments composed of alpha- and beta-tubulin heterodimers. Microtubules grow by the addition of GTP-tubulin dimers to the microtubule end, where a stabilizing cap forms. Below the cap, tubulin dimers are in GDP-bound state, owing to GTPase activity of alpha-tubulin. This Mus musculus (Mouse) protein is Tubulin alpha-1C chain (Tuba1c).